Here is a 156-residue protein sequence, read N- to C-terminus: Arginine repressor (156 aa).

It belongs to the ArgR family.

The protein resides in the cytoplasm. It functions in the pathway amino-acid biosynthesis; L-arginine biosynthesis [regulation]. Regulates arginine biosynthesis genes. This Vibrio atlanticus (strain LGP32) (Vibrio splendidus (strain Mel32)) protein is Arginine repressor.